A 240-amino-acid chain; its full sequence is uncharacterized protein (240 aa).

Transmembrane regions (helical) follow at residues 16-36 (AVFFLYAALAIIGFAIGYFIP) and 67-87 (FITALLGMCAGIWFAHSVIAM).

The protein resides in the cell membrane. This is an uncharacterized protein from Bacillus subtilis (strain 168).